Reading from the N-terminus, the 209-residue chain is Small ribosomal subunit protein uS4 (209 aa).

The region spanning 99–161 is the S4 RNA-binding domain; it reads CRLDNIAFRL…SSKLVVVEMG (63 aa).

It belongs to the universal ribosomal protein uS4 family. As to quaternary structure, part of the 30S ribosomal subunit. Contacts protein S5. The interaction surface between S4 and S5 is involved in control of translational fidelity.

One of the primary rRNA binding proteins, it binds directly to 16S rRNA where it nucleates assembly of the body of the 30S subunit. Its function is as follows. With S5 and S12 plays an important role in translational accuracy. The protein is Small ribosomal subunit protein uS4 of Acidobacterium capsulatum (strain ATCC 51196 / DSM 11244 / BCRC 80197 / JCM 7670 / NBRC 15755 / NCIMB 13165 / 161).